Consider the following 235-residue polypeptide: RAD9, HUS1, RAD1-interacting nuclear orphan protein 1 (235 aa).

Position 50 is a phosphoserine (Ser-50). The short motif at 54 to 60 (SWVLPQF) is the RAD1-binding motif element. Residues 66–106 (SRFPTHRKHHRDQARHPTRRSTCKFPRLTFESPESSSSETL) are disordered. Residues 69–87 (PTHRKHHRDQARHPTRRST) are compositionally biased toward basic residues. Residues 96-106 (ESPESSSSETL) show a composition bias toward low complexity. Positions 123–130 (RRPLVPLF) match the D-box motif. The tract at residues 156-198 (QTPGSSVREDPISPDQKENSLPSCILGPRTPRTPEPGPVLVKD) is disordered. A compositionally biased stretch (basic and acidic residues) spans 162-173 (VREDPISPDQKE). Positions 171 to 175 (QKENS) match the KEN box motif.

As to quaternary structure, interacts (when phosphorylated by PLK1) with POLQ; promoting POLQ recruitment to DNA damage sites. Interacts with RAD1; interaction is direct and promotes association with the 9-1-1 (RAD9-RAD1-HUS1) complex. Interacts with RAD18. Interacts with TOPBP1. Interacts with UBE2N. Post-translationally, phosphorylated at Ser-50 by PLK1, promoting interaction with polymerase theta (POLQ). Ubiquitinated and degraded by the APC/C complex upon mitotic exit.

The protein localises to the nucleus. The protein resides in the chromosome. Its function is as follows. Involved in microhomology-mediated end-joining (MMEJ) DNA repair by promoting recruitment of polymerase theta (POLQ) to DNA damage sites during mitosis. MMEJ is an alternative non-homologous end-joining (NHEJ) machinery that takes place during mitosis to repair double-strand breaks in DNA that originate in S-phase. Accumulates in M-phase; following phosphorylation by PLK1, interacts with POLQ, enabling its recruitment to double-strand breaks for subsequent repair. Also involved in the DNA damage response (DDR) signaling in response to genotoxic stresses such as ionizing radiation (IR) during the S phase. Recruited to sites of DNA damage through interaction with the 9-1-1 cell-cycle checkpoint response complex and TOPBP1 in a ATR-dependent manner. Required for the progression of the G1 to S phase transition. Plays a role in the stimulation of CHEK1 phosphorylation. This is RAD9, HUS1, RAD1-interacting nuclear orphan protein 1 (Rhno1) from Rattus norvegicus (Rat).